Consider the following 563-residue polypeptide: TSET complex member tstC (563 aa).

5 disordered regions span residues 146–170, 192–213, 235–298, 376–395, and 428–563; these read SPHQPPHYNTHHHTSTPSVAPSFIT, NSLSNSISNSNSNNNNNNNNDS, VLNS…NYNN, HPNAGKEAKEKEKEKENEFK, and GSAS…FLNF. A compositionally biased stretch (basic and acidic residues) spans 379–395; that stretch reads AGKEAKEKEKEKENEFK. A compositionally biased stretch (low complexity) spans 428 to 459; that stretch reads GSASSKSSPSTSPLSSSYNPSSPETSENSFSA. Residues 460-473 show a composition bias toward polar residues; that stretch reads TPISDSNSLKNSID. 2 stretches are compositionally biased toward low complexity: residues 474–487 and 507–543; these read NNNNNNNNNNNNNN and NNSKSSLSTSNSNISTPDNGASSPLASSTSGSASSAA. A compositionally biased stretch (polar residues) spans 552 to 563; the sequence is NSAKTKMNFLNF.

As to quaternary structure, component of the TSET complex, a heterohexamer composed of tstA, tstB, tstC, tstD, tstE and tstF, which may act in plasma membrane turnover. tstA, tstB, tstC and tstD are likely to be the core complex members with tstE and tstF acting as associated scaffold proteins.

This is TSET complex member tstC from Dictyostelium discoideum (Social amoeba).